The primary structure comprises 236 residues: Purine nucleoside phosphorylase DeoD-type (236 aa).

His4 contacts a purine D-ribonucleoside. Phosphate is bound by residues Gly20, Arg24, Arg43, and 87–90 (RVGT). A purine D-ribonucleoside contacts are provided by residues 179–181 (EME) and 203–204 (SD). Asp204 functions as the Proton donor in the catalytic mechanism.

It belongs to the PNP/UDP phosphorylase family. As to quaternary structure, homohexamer; trimer of homodimers.

It catalyses the reaction a purine D-ribonucleoside + phosphate = a purine nucleobase + alpha-D-ribose 1-phosphate. The catalysed reaction is a purine 2'-deoxy-D-ribonucleoside + phosphate = a purine nucleobase + 2-deoxy-alpha-D-ribose 1-phosphate. In terms of biological role, catalyzes the reversible phosphorolytic breakdown of the N-glycosidic bond in the beta-(deoxy)ribonucleoside molecules, with the formation of the corresponding free purine bases and pentose-1-phosphate. This chain is Purine nucleoside phosphorylase DeoD-type, found in Streptococcus pneumoniae (strain CGSP14).